We begin with the raw amino-acid sequence, 286 residues long: Bifunctional protein FolD (286 aa).

NADP(+)-binding positions include G165–S167 and S190.

It belongs to the tetrahydrofolate dehydrogenase/cyclohydrolase family. Homodimer.

The enzyme catalyses (6R)-5,10-methylene-5,6,7,8-tetrahydrofolate + NADP(+) = (6R)-5,10-methenyltetrahydrofolate + NADPH. The catalysed reaction is (6R)-5,10-methenyltetrahydrofolate + H2O = (6R)-10-formyltetrahydrofolate + H(+). It participates in one-carbon metabolism; tetrahydrofolate interconversion. In terms of biological role, catalyzes the oxidation of 5,10-methylenetetrahydrofolate to 5,10-methenyltetrahydrofolate and then the hydrolysis of 5,10-methenyltetrahydrofolate to 10-formyltetrahydrofolate. The sequence is that of Bifunctional protein FolD from Burkholderia cenocepacia (strain ATCC BAA-245 / DSM 16553 / LMG 16656 / NCTC 13227 / J2315 / CF5610) (Burkholderia cepacia (strain J2315)).